Consider the following 479-residue polypeptide: Ribulose bisphosphate carboxylase large chain (479 aa).

The propeptide occupies 1–2 (MS). Residues asparagine 123 and threonine 173 each coordinate substrate. Residue lysine 175 is the Proton acceptor of the active site. Lysine 177 is a binding site for substrate. Residues lysine 201, aspartate 203, and glutamate 204 each coordinate Mg(2+). Lysine 201 carries the post-translational modification N6-carboxylysine. Serine 208 carries the phosphoserine modification. Histidine 294 acts as the Proton acceptor in catalysis. Substrate-binding residues include arginine 295 and histidine 327. Threonine 330 is subject to Phosphothreonine. Serine 379 provides a ligand contact to substrate.

Belongs to the RuBisCO large chain family. Type I subfamily. As to quaternary structure, heterohexadecamer of 8 large chains and 8 small chains; disulfide-linked. The disulfide link is formed within the large subunit homodimers. Mg(2+) is required as a cofactor. Post-translationally, the disulfide bond which can form in the large chain dimeric partners within the hexadecamer appears to be associated with oxidative stress and protein turnover.

It localises to the plastid. It is found in the chloroplast. It catalyses the reaction 2 (2R)-3-phosphoglycerate + 2 H(+) = D-ribulose 1,5-bisphosphate + CO2 + H2O. The catalysed reaction is D-ribulose 1,5-bisphosphate + O2 = 2-phosphoglycolate + (2R)-3-phosphoglycerate + 2 H(+). RuBisCO catalyzes two reactions: the carboxylation of D-ribulose 1,5-bisphosphate, the primary event in carbon dioxide fixation, as well as the oxidative fragmentation of the pentose substrate in the photorespiration process. Both reactions occur simultaneously and in competition at the same active site. In Crucihimalaya wallichii (Rock-cress), this protein is Ribulose bisphosphate carboxylase large chain.